The following is a 422-amino-acid chain: Tyrosine--tRNA ligase (422 aa).

Tyr-35 is a binding site for L-tyrosine. The 'HIGH' region motif lies at 40 to 49 (PTAPSLHLGN). L-tyrosine contacts are provided by Tyr-170 and Gln-174. The short motif at 231 to 235 (KFGKT) is the 'KMSKS' region element. Position 234 (Lys-234) interacts with ATP. An S4 RNA-binding domain is found at 353-419 (APVVDLFAEV…GKKNLAAVEV (67 aa)).

Belongs to the class-I aminoacyl-tRNA synthetase family. TyrS type 1 subfamily. In terms of assembly, homodimer.

It localises to the cytoplasm. The catalysed reaction is tRNA(Tyr) + L-tyrosine + ATP = L-tyrosyl-tRNA(Tyr) + AMP + diphosphate + H(+). Catalyzes the attachment of tyrosine to tRNA(Tyr) in a two-step reaction: tyrosine is first activated by ATP to form Tyr-AMP and then transferred to the acceptor end of tRNA(Tyr). In Streptomyces avermitilis (strain ATCC 31267 / DSM 46492 / JCM 5070 / NBRC 14893 / NCIMB 12804 / NRRL 8165 / MA-4680), this protein is Tyrosine--tRNA ligase.